Reading from the N-terminus, the 86-residue chain is Large ribosomal subunit protein bL27 (86 aa).

Residues 1 to 24 (MAHKKAGGSTRNGRDSESKRLGVK) are disordered.

Belongs to the bacterial ribosomal protein bL27 family.

This chain is Large ribosomal subunit protein bL27, found in Alcanivorax borkumensis (strain ATCC 700651 / DSM 11573 / NCIMB 13689 / SK2).